The chain runs to 199 residues: Zinc finger matrin-type protein 2 (199 aa).

Ala-2 is subject to N-acetylalanine. Glycyl lysine isopeptide (Lys-Gly) (interchain with G-Cter in SUMO2) cross-links involve residues Lys-8, Lys-36, Lys-39, Lys-45, Lys-55, Lys-61, Lys-64, Lys-70, Lys-102, and Lys-123. Residues 27–46 (KRLTEEREKKDGKPVQPVKR) form a disordered region. The segment at 80–104 (YYCNVCDCVVKDSINFLDHINGKKH) adopts a Matrin-type zinc-finger fold. Basic and acidic residues predominate over residues 150 to 173 (REEEEKAKAYKKEKQKEKKRRAEE). The segment at 150–175 (REEEEKAKAYKKEKQKEKKRRAEEDL) is disordered.

As to quaternary structure, component of the spliceosome B complex.

Its subcellular location is the nucleus. Involved in pre-mRNA splicing as a component of the spliceosome. The chain is Zinc finger matrin-type protein 2 (ZMAT2) from Homo sapiens (Human).